A 255-amino-acid chain; its full sequence is MISILVSRFLLAALVLQYATIDAVNYCNLPCRGDRFHVGCGESAFAQECGESPETLDLLKEHTDEILSKINDVRDHVAKGSWGLPMAARMKVVVWDEELARLATRHTKGCLAETHACRNTERFLFPGQLNFEYTDDKLPQTKELIDAAIKKGHLQKHNISREIIESYKDNGPDGDVEELALALSDRVTAVGCGLTTWQDGAKARALLTCNFSSQNIWERPVYKIGNSPGEKCIEKDETYKNLCSASEPIDSNESN.

The N-terminal stretch at M1–A23 is a signal peptide. The Cell attachment site signature appears at R32–D34. The region spanning L67 to F211 is the SCP domain.

Belongs to the CRISP family. In terms of tissue distribution, expressed in salivary glands.

The protein localises to the secreted. Inhibits platelet aggregation induced by all agonists tested (ADP, arachidonic acid, the thromboxane A2 analog U46619, thrombin, and snake venom snaclecs (TMVA that activates platelet through GPIB, and stejnulxin that specifically acts through GPVI (GP6))). May act by competing with fibrinogen for binding to glycoprotein IIb/IIIa (ITGA2B/ITGB3). The protein is Tabinhibitin 2 of Tabanus yao (Horsefly).